Consider the following 64-residue polypeptide: Large ribosomal subunit protein uL30 (64 aa).

It belongs to the universal ribosomal protein uL30 family. Part of the 50S ribosomal subunit.

This chain is Large ribosomal subunit protein uL30, found in Methylorubrum populi (strain ATCC BAA-705 / NCIMB 13946 / BJ001) (Methylobacterium populi).